The sequence spans 599 residues: Beta-(1--&gt;2)glucan export ATP-binding/permease protein NdvA (599 aa).

Residues 21 to 301 (TITMCVASVL…ISAFINQTVT (281 aa)) form the ABC transmembrane type-1 domain. Transmembrane regions (helical) follow at residues 22–42 (ITMC…PVLF), 55–75 (IFSP…AAVF), 156–176 (MRMS…GQLV), 248–268 (MAST…VTKG), and 276–296 (IAFI…SAFI). Residues 335 to 569 (IVFDNVTYEF…GGRFSDLLRA (235 aa)) enclose the ABC transporter domain. 368–375 (GPTGAGKT) provides a ligand contact to ATP.

The protein belongs to the ABC transporter superfamily. Beta-(1--&gt;2)glucan exporter (TC 3.A.1.108.1) family. In terms of assembly, homodimer.

The protein resides in the cell inner membrane. The enzyme catalyses [(1-&gt;2)-beta-D-glucosyl](n)(in) + ATP + H2O = [(1-&gt;2)-beta-D-glucosyl](n)(out) + ADP + phosphate + H(+). In terms of biological role, involved in beta-(1--&gt;2)glucan export. Transmembrane domains (TMD) form a pore in the inner membrane and the ATP-binding domain (NBD) is responsible for energy generation. The polypeptide is Beta-(1--&gt;2)glucan export ATP-binding/permease protein NdvA (Brucella melitensis biotype 1 (strain ATCC 23456 / CCUG 17765 / NCTC 10094 / 16M)).